The sequence spans 431 residues: Adenylosuccinate synthetase (431 aa).

GTP is bound by residues 12–18 (GDEGKGK) and 40–42 (GHT). Asp13 functions as the Proton acceptor in the catalytic mechanism. The Mg(2+) site is built by Asp13 and Gly40. IMP contacts are provided by residues 13–16 (DEGK), 38–41 (NAGH), Thr129, Arg143, Gln224, Thr239, and Arg303. The active-site Proton donor is the His41. 299 to 305 (VTTGRAR) provides a ligand contact to substrate. Residues Arg305, 331–333 (KLD), and 413–415 (GVG) contribute to the GTP site.

The protein belongs to the adenylosuccinate synthetase family. As to quaternary structure, homodimer. Mg(2+) is required as a cofactor.

Its subcellular location is the cytoplasm. The catalysed reaction is IMP + L-aspartate + GTP = N(6)-(1,2-dicarboxyethyl)-AMP + GDP + phosphate + 2 H(+). Its pathway is purine metabolism; AMP biosynthesis via de novo pathway; AMP from IMP: step 1/2. Plays an important role in the de novo pathway of purine nucleotide biosynthesis. Catalyzes the first committed step in the biosynthesis of AMP from IMP. The protein is Adenylosuccinate synthetase of Mycobacteroides abscessus (strain ATCC 19977 / DSM 44196 / CCUG 20993 / CIP 104536 / JCM 13569 / NCTC 13031 / TMC 1543 / L948) (Mycobacterium abscessus).